The following is a 111-amino-acid chain: Wound-induced proteinase inhibitor 1 (111 aa).

Residues 1-23 (MEAKFAHIILFFLLAFSFETLMA) form the signal peptide. Residues 24–36 (RKESDGPEVIKLL) constitute a propeptide that is removed on maturation.

This sequence belongs to the protease inhibitor I13 (potato type I serine protease inhibitor) family.

It localises to the secreted. This is Wound-induced proteinase inhibitor 1 from Solanum peruvianum (Peruvian tomato).